We begin with the raw amino-acid sequence, 290 residues long: Diaminopimelate epimerase (290 aa).

Asn17, Gln49, and Asn69 together coordinate substrate. The active-site Proton donor is Cys78. Residues 79 to 80 (GN), Asn165, Asn198, and 216 to 217 (ER) each bind substrate. Residue Cys225 is the Proton acceptor of the active site. 226-227 (GS) serves as a coordination point for substrate.

It belongs to the diaminopimelate epimerase family. Homodimer.

The protein resides in the cytoplasm. It carries out the reaction (2S,6S)-2,6-diaminopimelate = meso-2,6-diaminopimelate. It participates in amino-acid biosynthesis; L-lysine biosynthesis via DAP pathway; DL-2,6-diaminopimelate from LL-2,6-diaminopimelate: step 1/1. In terms of biological role, catalyzes the stereoinversion of LL-2,6-diaminopimelate (L,L-DAP) to meso-diaminopimelate (meso-DAP), a precursor of L-lysine and an essential component of the bacterial peptidoglycan. The chain is Diaminopimelate epimerase from Methylocella silvestris (strain DSM 15510 / CIP 108128 / LMG 27833 / NCIMB 13906 / BL2).